Consider the following 236-residue polypeptide: 2,3,4,5-tetrahydropyridine-2,6-dicarboxylate N-acetyltransferase (236 aa).

The protein belongs to the transferase hexapeptide repeat family. DapH subfamily.

It carries out the reaction (S)-2,3,4,5-tetrahydrodipicolinate + acetyl-CoA + H2O = L-2-acetamido-6-oxoheptanedioate + CoA. It participates in amino-acid biosynthesis; L-lysine biosynthesis via DAP pathway; LL-2,6-diaminopimelate from (S)-tetrahydrodipicolinate (acetylase route): step 1/3. Its function is as follows. Catalyzes the transfer of an acetyl group from acetyl-CoA to tetrahydrodipicolinate. This chain is 2,3,4,5-tetrahydropyridine-2,6-dicarboxylate N-acetyltransferase, found in Clostridium perfringens (strain ATCC 13124 / DSM 756 / JCM 1290 / NCIMB 6125 / NCTC 8237 / Type A).